Consider the following 145-residue polypeptide: MSVPDKFFGRYQLDKSENFDEFLSSKGVNWFVRQMIKLAGLTKIISQNQEAGKYNMENLTSKKNTNYQAWELGKKFEAPGLDGNQHEITFDFKDEILSEHHIRLNEPETSAETYFYTIDDQNQLVMRMENNGIVCRRWFKRVEQK.

Belongs to the calycin superfamily. Fatty-acid binding protein (FABP) family.

The sequence is that of Fatty acid-binding protein homolog 4 (lbp-4) from Caenorhabditis elegans.